Consider the following 189-residue polypeptide: Protein GrpE (189 aa).

The tract at residues 1-31 (MSKKHMKGNGGEVPENSEMSGSEELVAVEPG) is disordered.

It belongs to the GrpE family. Homodimer.

Its subcellular location is the cytoplasm. Functionally, participates actively in the response to hyperosmotic and heat shock by preventing the aggregation of stress-denatured proteins, in association with DnaK and GrpE. It is the nucleotide exchange factor for DnaK and may function as a thermosensor. Unfolded proteins bind initially to DnaJ; upon interaction with the DnaJ-bound protein, DnaK hydrolyzes its bound ATP, resulting in the formation of a stable complex. GrpE releases ADP from DnaK; ATP binding to DnaK triggers the release of the substrate protein, thus completing the reaction cycle. Several rounds of ATP-dependent interactions between DnaJ, DnaK and GrpE are required for fully efficient folding. This Syntrophobacter fumaroxidans (strain DSM 10017 / MPOB) protein is Protein GrpE.